A 115-amino-acid chain; its full sequence is Cholecystokinin (115 aa).

The N-terminal stretch at 1–20 (MKSGVCLCVVMAVLAAGALA) is a signal peptide. The propeptide occupies 21 to 70 (QPVVPAEATDPVEQRAQEAPRRQLRAVLRTDGEPRARLGALLARYIQQVR). Position 97 is a sulfotyrosine (tyrosine 97). A Phenylalanine amide modification is found at phenylalanine 103. The propeptide occupies 107 to 115 (SAEDYEYPS). Sulfotyrosine is present on residues tyrosine 111 and tyrosine 113.

It belongs to the gastrin/cholecystokinin family. As to quaternary structure, binds to CCK-A receptors in the pancreas and CCK-B receptors in the brain. Post-translationally, the precursor is cleaved by proteases to produce a number of active cholecystokinins. As to expression, expressed and secreted by discrete enteroendocrine cells that reside as single cells scattered among enterocytes in the mucosa of the small intestine. Released into the blood following ingestion of a meal.

The protein localises to the secreted. In terms of biological role, this peptide hormone induces gall bladder contraction and the release of pancreatic enzymes in the gut. Its function in the brain is not clear. Binding to CCK-A receptors stimulates amylase release from the pancreas, binding to CCK-B receptors stimulates gastric acid secretion. The protein is Cholecystokinin (Cck) of Mus musculus (Mouse).